The primary structure comprises 416 residues: METSSLWPPRPSPSAGLSLEARLGVDTRLWAKVLFTALYSLIFALGTAGNALSVHVVLKARAGRPGRLRYHVLSLALSALLLLLISVPMELYNFVWSHYPWVFGDLGCRGYYFVRELCAYATVLSVASLSAERCLAVCQPLRARRLLTPRRTRRLLSLVWVASLGLALPMAVIMGQKHEMERADGEPEPASRVCTVLVSRATLQVFIQVNVLVSFVLPLALTAFLNGITVNHLVALYSQVPSASAQVNSIPSRLELLSEEGLLGFITWRKTLSLGVQASLVRHKDASQIRSLQHSAQVLRAIVAVYVICWLPYHARRLMYCYIPDDGWTDELYDFYHYFYMVTNTLFYVSSAVTPVLYNAVSSSFRKLFLESLSSLCGEQRSVVPLPQEAPESTTSTYSFRLWGSPRNPSLGEIQV.

Topologically, residues 1-32 (METSSLWPPRPSPSAGLSLEARLGVDTRLWAK) are extracellular. Residues 33 to 55 (VLFTALYSLIFALGTAGNALSVH) traverse the membrane as a helical segment. The Cytoplasmic segment spans residues 56–64 (VVLKARAGR). Residues 65-87 (PGRLRYHVLSLALSALLLLLISV) form a helical membrane-spanning segment. The Extracellular segment spans residues 88-109 (PMELYNFVWSHYPWVFGDLGCR). The cysteines at positions 108 and 194 are disulfide-linked. Residues 110 to 131 (GYYFVRELCAYATVLSVASLSA) traverse the membrane as a helical segment. Residues 132 to 154 (ERCLAVCQPLRARRLLTPRRTRR) lie on the Cytoplasmic side of the membrane. Residues 155 to 176 (LLSLVWVASLGLALPMAVIMGQ) traverse the membrane as a helical segment. The Extracellular portion of the chain corresponds to 177–217 (KHEMERADGEPEPASRVCTVLVSRATLQVFIQVNVLVSFVL). Residues 218 to 237 (PLALTAFLNGITVNHLVALY) traverse the membrane as a helical segment. Topologically, residues 238–297 (SQVPSASAQVNSIPSRLELLSEEGLLGFITWRKTLSLGVQASLVRHKDASQIRSLQHSAQ) are cytoplasmic. The chain crosses the membrane as a helical span at residues 298 to 318 (VLRAIVAVYVICWLPYHARRL). Residues 319-337 (MYCYIPDDGWTDELYDFYH) are Extracellular-facing. Residues 338-358 (YFYMVTNTLFYVSSAVTPVLY) form a helical membrane-spanning segment. Topologically, residues 359–416 (NAVSSSFRKLFLESLSSLCGEQRSVVPLPQEAPESTTSTYSFRLWGSPRNPSLGEIQV) are cytoplasmic. C377 is lipidated: S-palmitoyl cysteine. Position 410 is a phosphoserine (S410).

This sequence belongs to the G-protein coupled receptor 1 family. Neurotensin receptor subfamily. NTSR2 sub-subfamily. In terms of tissue distribution, expressed maximally in the cerebellum, hippocampus, piriform cortex and neocortex of adult brain.

Its subcellular location is the cell membrane. Its function is as follows. Receptor for the tridecapeptide neurotensin. It is associated with G proteins that activate a phosphatidylinositol-calcium second messenger system. The chain is Neurotensin receptor type 2 (Ntsr2) from Mus musculus (Mouse).